The following is a 213-amino-acid chain: Ion-translocating oxidoreductase complex subunit A (213 aa).

At 1-24 (MLLLWQSRIMPGSEANIYITMTEY) the chain is on the periplasmic side. A helical transmembrane segment spans residues 25–45 (LLLLIGTVLVNNFVLVKFLGL). At 46–58 (CPFMGVSKKLETA) the chain is on the cytoplasmic side. A helical transmembrane segment spans residues 59 to 79 (IGMGLATTFVLTLASVCAYLV). Residues 80–86 (ESYVLRP) lie on the Periplasmic side of the membrane. A helical transmembrane segment spans residues 87–107 (LGIEYLRTMSFILVIAVVVQF). Over 108–121 (TEMVVHKTSPTLYR) the chain is Cytoplasmic. A helical membrane pass occupies residues 122 to 142 (LLGIFLPLITTNCAVLGVALL). The Periplasmic portion of the chain corresponds to 143 to 153 (NINENHNFIQS). The helical transmembrane segment at 154 to 174 (IIYGFGAAVGFSLVLILFASM) threads the bilayer. At 175–190 (RERIHVADVPAPFKGA) the chain is on the cytoplasmic side. The helical transmembrane segment at 191 to 211 (SIAMITAGLMSLAFMGFTGLV) threads the bilayer. Topologically, residues 212-213 (KL) are periplasmic.

It belongs to the NqrDE/RnfAE family. The complex is composed of six subunits: RnfA, RnfB, RnfC, RnfD, RnfE and RnfG.

It localises to the cell inner membrane. Its function is as follows. Part of a membrane-bound complex that couples electron transfer with translocation of ions across the membrane. This Vibrio cholerae serotype O1 (strain ATCC 39541 / Classical Ogawa 395 / O395) protein is Ion-translocating oxidoreductase complex subunit A.